Consider the following 469-residue polypeptide: Zinc transporter SLC39A7 (469 aa).

A helical transmembrane segment spans residues 5 to 25; sequence LGAPHWVAVGLLTWAALGLLV. Composition is skewed to basic and acidic residues over residues 43–56 and 66–114; these read HGHS…DFHH and HTHE…EHSH. A disordered region spans residues 43 to 122; that stretch reads HGHSHRRSHE…SHGGYGESGA (80 aa). The residue at position 66 (His66) is a Pros-methylhistidine. 3 helical membrane passes run 138–158, 169–189, and 214–234; these read ALGA…LIPV, LQIL…LHLI, and GPIL…LVVE. The span at 242–255 shows a compositional bias: basic residues; it reads GGHGHSHGHGHTHG. The interval 242–313 is disordered; sequence GGHGHSHGHG…QNSEEEKTGS (72 aa). Residues 256 to 266 are compositionally biased toward low complexity; sequence HTQGSHGHGTQ. 2 positions are modified to phosphoserine: Ser275 and Ser276. Basic and acidic residues predominate over residues 295–313; sequence RLKDGPLRPQNSEEEKTGS. The next 3 membrane-spanning stretches (helical) occupy residues 386-406, 417-437, and 448-468; these read LTAI…GGAV, GWVL…SVLP, and SLLE…IAHL.

The protein belongs to the ZIP transporter (TC 2.A.5) family. KE4/Catsup subfamily. In terms of assembly, homodimer. Methylation at some His residue by METTL9 leads to reduced zinc-binding. In terms of processing, rapidly phosphorylated by CK2 following Zn(2+) treatment. This phosphorylation is required for efficient cytosolic Zn(2+) release.

It localises to the endoplasmic reticulum membrane. It is found in the golgi apparatus. The protein localises to the cis-Golgi network membrane. The catalysed reaction is Zn(2+)(in) = Zn(2+)(out). Functionally, transports Zn(2+) from the endoplasmic reticulum (ER)/Golgi apparatus to the cytosol, playing an essential role in the regulation of cytosolic zinc levels. Acts as a gatekeeper of zinc release from intracellular stores, requiring post-translational activation by phosphorylation, resulting in activation of multiple downstream pathways leading to cell growth and proliferation. Has an essential role in B cell development and is required for proper B cell receptor signaling. Plays an important role in maintaining intestinal epithelial homeostasis and skin dermis development by regulating ER function. Controls cell signaling pathways involved in glucose metabolism in skeletal muscle. Has a protective role against ER stress in different biological contexts. Mediates Zn(2+)-induced ferroptosis. In Canis lupus familiaris (Dog), this protein is Zinc transporter SLC39A7.